The sequence spans 499 residues: 6-hydroxynicotinate reductase (499 aa).

4Fe-4S ferredoxin-type domains are found at residues 1–29 (MFKI…YEKK) and 31–61 (KGAI…NDAP). 8 residues coordinate [4Fe-4S] cluster: Cys-9, Cys-12, Cys-15, Cys-19, Cys-41, Cys-44, Cys-47, and Cys-51.

Homotetramer. An oxidized flavin is required as a cofactor. It depends on [2Fe-2S] cluster as a cofactor. [4Fe-4S] cluster serves as cofactor.

It catalyses the reaction 1,4,5,6-tetrahydro-6-oxonicotinate + oxidized 2[4Fe-4S]-[ferredoxin] = 6-hydroxynicotinate + reduced 2[4Fe-4S]-[ferredoxin] + 2 H(+). The protein operates within cofactor degradation; nicotinate degradation; propanoate and pyruvate from 6-hydroxynicotinate: step 1/8. Its function is as follows. Catalyzes the reversible reduction of 6-hydroxynicotinate to 6-oxo-1,4,5,6-tetrahydronicotinate. This is 6-hydroxynicotinate reductase from Eubacterium barkeri (Clostridium barkeri).